The primary structure comprises 662 residues: Fusion glycoprotein F0 (662 aa).

Residues 1–73 are disordered; it reads MHRGIPKSSK…TRSRKQTSHR (73 aa). The signal sequence occupies residues 1-135; it reads MHRGIPKSSK…MASLFLCSKA (135 aa). Polar residues predominate over residues 8–19; sequence SSKTQTHTQQDR. A compositionally biased stretch (basic residues) spans 64–73; sequence TRSRKQTSHR. The Extracellular portion of the chain corresponds to 136 to 608; it reads QIHWDNLSTI…VRRSSFNFGS (473 aa). N-linked (GlcNAc...) asparagine; by host glycosylation is found at asparagine 141, asparagine 173, and asparagine 179. The fusion peptide stretch occupies residues 225-249; it reads FAGVVLAGVALGVATAAQITAGIAL. Residues 250–278 adopt a coiled-coil conformation; that stretch reads HQSNLNAQAIQSLRTSLEQSNKAIEEIRE. Cystine bridges form between cysteine 446–cysteine 455, cysteine 470–cysteine 478, cysteine 502–cysteine 507, and cysteine 509–cysteine 532. Residues 574–599 are a coiled coil; it reads NLGNALKKLDDAKVLIDSSNQILETV. A helical transmembrane segment spans residues 609 to 629; the sequence is LLSVPILSCTALALLLLIYCC. At 630 to 662 the chain is on the cytoplasmic side; that stretch reads KRRYQQTLKQHTKVDPAFKPDLTGTSKSYVRSL.

The protein belongs to the paramyxoviruses fusion glycoprotein family. In terms of assembly, homotrimer of disulfide-linked F1-F2. The inactive precursor F0 is glycosylated and proteolytically cleaved into F1 and F2 to be functionally active. The cleavage is mediated by cellular proteases during the transport and maturation of the polypeptide.

It localises to the virion membrane. The protein localises to the host cell membrane. In terms of biological role, class I viral fusion protein. Under the current model, the protein has at least 3 conformational states: pre-fusion native state, pre-hairpin intermediate state, and post-fusion hairpin state. During viral and plasma cell membrane fusion, the heptad repeat (HR) regions assume a trimer-of-hairpins structure, positioning the fusion peptide in close proximity to the C-terminal region of the ectodomain. The formation of this structure appears to drive apposition and subsequent fusion of viral and plasma cell membranes. Directs fusion of viral and cellular membranes leading to delivery of the nucleocapsid into the cytoplasm. This fusion is pH independent and occurs directly at the outer cell membrane. The trimer of F1-F2 (F protein) probably interacts with H at the virion surface. Upon HN binding to its cellular receptor, the hydrophobic fusion peptide is unmasked and interacts with the cellular membrane, inducing the fusion between cell and virion membranes. Later in infection, F proteins expressed at the plasma membrane of infected cells could mediate fusion with adjacent cells to form syncytia, a cytopathic effect that could lead to tissue necrosis. The protein is Fusion glycoprotein F0 (F) of Canine distemper virus (strain Onderstepoort) (CDV).